Reading from the N-terminus, the 284-residue chain is L-ribulose-5-phosphate 3-epimerase UlaE (284 aa).

The protein belongs to the L-ribulose-5-phosphate 3-epimerase family.

It carries out the reaction L-ribulose 5-phosphate = L-xylulose 5-phosphate. It participates in cofactor degradation; L-ascorbate degradation; D-xylulose 5-phosphate from L-ascorbate: step 3/4. In terms of biological role, catalyzes the isomerization of L-xylulose-5-phosphate to L-ribulose-5-phosphate. Is involved in the anaerobic L-ascorbate utilization. This is L-ribulose-5-phosphate 3-epimerase UlaE from Escherichia coli (strain 55989 / EAEC).